The sequence spans 297 residues: MRLEAKTKLSSKAKEPINVVKYNRTGKYVLAAGNERVVRLWNVKSGACIHEYAGHGHEILDLDLVYDSTKFASCGGDKFIQVWDVNTGKVDRRLGGHLAQINTIRYNEDSSILASGSFDSKVRLWDCRSNSFSPIQVLADAKDSVSSIDIAEHLIVTGSTDGTLRTYDIRKGTLSSDYFSHPITSVKTSKSASFSLISSLNSSIHLLDQETGKILKSYIGLKNMEYRVRSSFNQSETIVFSGSEDGKVYLWDLENETQITSTSVVGTPIVTDISCHPTMDDFIIATVHGDLFIYQYN.

WD repeat units lie at residues 12–51 (KAKE…CIHE), 54–93 (GHGH…VDRR), 96–135 (GHLA…FSPI), 140–177 (DAKD…LSSD), 179–217 (FSHP…ILKS), 222–261 (KNME…QITS), and 265–297 (VGTP…YQYN).

It belongs to the WD repeat MORG1 family.

It localises to the cytoplasm. Its subcellular location is the nucleus. This is an uncharacterized protein from Schizosaccharomyces pombe (strain 972 / ATCC 24843) (Fission yeast).